Reading from the N-terminus, the 644-residue chain is Transcription factor cep-1 (644 aa).

Residues 223–418 mediate DNA binding; that stretch reads EKWMEIDVLK…NFCEREDAKQ (196 aa). Cys-307, His-310, Cys-361, and Cys-365 together coordinate Zn(2+). Residues 528 to 555 form a required for tertiary structure stability of the protein region; the sequence is TNYSFRTLTLSTAEYTKVVEFLAREAKV.

It belongs to the p53 family. In terms of assembly, homodimer. Interacts (via C-terminus domain) with prmt-5; not methylated by prmt-5. Interacts with cbp-1 (via HAT domain); cep-1 transcriptional activity may be inhibited by interaction with methylated cbp-1. Component of a complex that contains prmt-5 and cbp-1. Interacts with ape-1; the interaction inhibits pro-apoptotic activity of cep-1. The cofactor is Zn(2+). Post-translationally, phosphorylated in response to IR-induced DNA damage which is thought to be mediated by akt-1. In terms of tissue distribution, expressed in pharyngeal muscle and neurons.

Its subcellular location is the nucleus. Its function is as follows. Transcriptional activator that binds the same DNA consensus sequence as p53. Has a role in normal development to ensure proper meiotic chromosome segregation. Promotes apoptosis under conditions of cellular and genotoxic stress in response to DNA damage, hypoxia, or starvation. Regulates germline apoptosis in response to DNA damage. Its pro-apoptotic activity is inhibited when bound to ape-1 in vitro. Plays a role in cell cycle arrest in the germline in response to DNA damage by UV-C light. However, not required for survival in response to DNA damage induced by UV-C light, indicating that it is unlikely to be involved in DNA repair. Required for induction of ced-13 in response to DNA damage. Regulates DNA damage-induced apoptosis by inducing transcription of the programmed cell death activator egl-1. Regulates germline proliferation by activating phg-1. Modulates lifespan. The protein is Transcription factor cep-1 of Caenorhabditis elegans.